We begin with the raw amino-acid sequence, 573 residues long: Potassium-transporting ATPase potassium-binding subunit (573 aa).

Transmembrane regions (helical) follow at residues 6 to 26 (ILFA…GSYI), 66 to 86 (FFSL…ILLL), 135 to 155 (ALAV…IALI), 177 to 197 (VFWI…FQGV), 257 to 277 (IQMV…GKWV), 283 to 303 (GWLI…VMTI), 382 to 402 (IFGG…LAVF), 428 to 448 (MFAL…AAVI), 493 to 513 (ITIA…VIML), and 537 to 557 (FIFA…TIFP).

The protein belongs to the KdpA family. As to quaternary structure, the system is composed of three essential subunits: KdpA, KdpB and KdpC.

It is found in the cell inner membrane. In terms of biological role, part of the high-affinity ATP-driven potassium transport (or Kdp) system, which catalyzes the hydrolysis of ATP coupled with the electrogenic transport of potassium into the cytoplasm. This subunit binds the periplasmic potassium ions and delivers the ions to the membrane domain of KdpB through an intramembrane tunnel. The polypeptide is Potassium-transporting ATPase potassium-binding subunit (Francisella tularensis subsp. holarctica (strain FTNF002-00 / FTA)).